An 82-amino-acid chain; its full sequence is Beta-insect depressant toxin LqqIT2 (82 aa).

Residues Met1 to Ala21 form the signal peptide. In terms of domain architecture, LCN-type CS-alpha/beta spans Asp22–Gly82. 4 disulfide bridges follow: Cys31–Cys81, Cys35–Cys56, Cys42–Cys63, and Cys46–Cys65.

Belongs to the long (4 C-C) scorpion toxin superfamily. Sodium channel inhibitor family. Beta subfamily. As to expression, expressed by the venom gland.

It is found in the secreted. Functionally, depressant insect beta-toxins cause a transient contraction paralysis followed by a slow flaccid paralysis. They bind voltage-independently at site-4 of sodium channels and shift the voltage of activation toward more negative potentials thereby affecting sodium channel activation and promoting spontaneous and repetitive firing. Aside from typical beta-toxin effects, this toxin also affects the inactivation process and ion selectivity of the insect voltage-gated sodium channel. This toxin is active only on insects. Is active on the insect voltage-gated sodium channel para. In vivo, when injected intraperitoneally, it exhibits analgesic activity, increasing hot plate and tail flick withdrawal latencies in a dose-dependent fashion. This phenomenon might be partly due to an inhibitory mechanism activated by noxious stimuli. This is Beta-insect depressant toxin LqqIT2 from Leiurus quinquestriatus quinquestriatus (Egyptian scorpion).